Consider the following 136-residue polypeptide: Cancer/testis antigen 62 (136 aa).

Residues 1 to 22 (MMHTTSYRRLSPPHLTDQPSAY) are disordered.

In terms of tissue distribution, testis specific. Expressed in cancer cell lines.

In Homo sapiens (Human), this protein is Cancer/testis antigen 62 (CT62).